Reading from the N-terminus, the 334-residue chain is MEQNSRALIDGFNRKIDYLRMSVTDRCDFRCVYCMAEDMQFLPRQQILSLEELFQVAERFVALGTRKIRLTGGEPLVRQGIVDLCGRIAALPGLRELCMTSNGSQLPRLAQPLFDAGLSRLNISLDSLDAERFKQLTRTGDLAQVIAGIDAARRAGFQRIKLNCVVLKGRNDDELVDLVRFAIDRELDITFIEEMPLGVISEHERGESFCSSDEVRARLAEQFTLIESTESSQGPARYWRLAEASSTRVGFISPHSHNFCATCNRVRLTVEGRLLLCLGNEHSMDLKQVLRAHPGDAERLEKAIRDSLHLKPYRHHFEVGGDVQILRFMNMTGG.

The Radical SAM core domain maps to glycine 11–alanine 236. Arginine 20 provides a ligand contact to GTP. 2 residues coordinate [4Fe-4S] cluster: cysteine 27 and cysteine 31. Tyrosine 33 lines the S-adenosyl-L-methionine pocket. Cysteine 34 contributes to the [4Fe-4S] cluster binding site. Residue arginine 69 participates in GTP binding. S-adenosyl-L-methionine is bound at residue glycine 73. A GTP-binding site is contributed by threonine 100. Serine 124 is a binding site for S-adenosyl-L-methionine. Lysine 161 is a binding site for GTP. Position 195 (methionine 195) interacts with S-adenosyl-L-methionine. 2 residues coordinate [4Fe-4S] cluster: cysteine 260 and cysteine 263. Arginine 265–arginine 267 serves as a coordination point for GTP. A [4Fe-4S] cluster-binding site is contributed by cysteine 277.

It belongs to the radical SAM superfamily. MoaA family. Monomer and homodimer. [4Fe-4S] cluster is required as a cofactor.

The enzyme catalyses GTP + AH2 + S-adenosyl-L-methionine = (8S)-3',8-cyclo-7,8-dihydroguanosine 5'-triphosphate + 5'-deoxyadenosine + L-methionine + A + H(+). Its pathway is cofactor biosynthesis; molybdopterin biosynthesis. Its function is as follows. Catalyzes the cyclization of GTP to (8S)-3',8-cyclo-7,8-dihydroguanosine 5'-triphosphate. This chain is GTP 3',8-cyclase, found in Pseudomonas putida (strain W619).